Here is a 500-residue protein sequence, read N- to C-terminus: Trehalose-6-phosphate synthase (500 aa).

Position 28 (Arg28) interacts with D-glucose 6-phosphate. 48 to 49 (GG) is a UDP-alpha-D-glucose binding site. The D-glucose 6-phosphate site is built by Tyr104 and Asp158. Residues Arg300 and Lys305 each contribute to the UDP-alpha-D-glucose site. Residue Arg338 coordinates D-glucose 6-phosphate. 403–407 (LVAKE) is a UDP-alpha-D-glucose binding site.

The protein belongs to the glycosyltransferase 20 family. Homotetramer.

It carries out the reaction ADP-alpha-D-glucose + D-glucose 6-phosphate = alpha,alpha-trehalose 6-phosphate + ADP + H(+). The enzyme catalyses CDP-alpha-D-glucose + D-glucose 6-phosphate = alpha,alpha-trehalose 6-phosphate + CDP + H(+). It catalyses the reaction GDP-alpha-D-glucose + D-glucose 6-phosphate = alpha,alpha-trehalose 6-phosphate + GDP + H(+). The catalysed reaction is TDP-alpha-D-glucose + D-glucose 6-phosphate = 5-methyl-UDP + alpha,alpha-trehalose 6-phosphate + H(+). It carries out the reaction D-glucose 6-phosphate + UDP-alpha-D-glucose = alpha,alpha-trehalose 6-phosphate + UDP + H(+). Its pathway is glycan biosynthesis; trehalose biosynthesis. Its function is as follows. Probably involved in the osmoprotection via the biosynthesis of trehalose and in the production of glycogen and alpha-glucan via the TreS-Pep2 branch involved in the biosynthesis of maltose-1-phosphate (M1P). Catalyzes the transfer of glucose from UDP-glucose (UDP-Glc) to D-glucose 6-phosphate (Glc-6-P) to form trehalose-6-phosphate. Probably also able to use ADP-Glc, CDP-Glc, GDP-Glc and TDP-Glc as glucosyl donors. This chain is Trehalose-6-phosphate synthase, found in Mycobacterium marinum (strain ATCC BAA-535 / M).